We begin with the raw amino-acid sequence, 506 residues long: Probable alpha-L-arabinofuranosidase B (506 aa).

Residues 1-26 (MLSQPSRERAFVLALGLVVSSSLAAA) form the signal peptide. The segment at 27-343 (APCDIYSSGG…ADIVAANYAV (317 aa)) is catalytic. Disulfide bonds link Cys29/Cys39, Cys89/Cys94, and Cys184/Cys185. Asp227 is a substrate binding site. Glu229 functions as the Nucleophile in the catalytic mechanism. A substrate-binding site is contributed by Asn230. Asn285 is a glycosylation site (N-linked (GlcNAc...) asparagine). Residue Gly304 coordinates substrate. Catalysis depends on Asp305, which acts as the Proton donor. Residues 344 to 506 (TSLTSGPALT…VSWVISSGFA (163 aa)) are ABD. A disulfide bridge links Cys409 with Cys447. Residues His424, Asn426, Phe427, Asp443, His471, Leu476, and Asp496 each coordinate substrate.

The protein belongs to the glycosyl hydrolase 54 family.

The protein localises to the secreted. The enzyme catalyses Hydrolysis of terminal non-reducing alpha-L-arabinofuranoside residues in alpha-L-arabinosides.. It functions in the pathway glycan metabolism; L-arabinan degradation. In terms of biological role, alpha-L-arabinofuranosidase involved in the degradation of arabinoxylan, a major component of plant hemicellulose. Able to hydrolyze 1,5-, 1,3- and 1,2-alpha-linkages not only in L-arabinofuranosyl oligosaccharides, but also in polysaccharides containing terminal non-reducing L-arabinofuranoses in side chains, like L-arabinan, arabinogalactan and arabinoxylan. This is Probable alpha-L-arabinofuranosidase B (abfB) from Aspergillus clavatus (strain ATCC 1007 / CBS 513.65 / DSM 816 / NCTC 3887 / NRRL 1 / QM 1276 / 107).